The sequence spans 175 residues: Co-chaperone protein HscB homolog (175 aa).

A J domain is found at 7–79; the sequence is SHFDLFDLPA…LKRATYLLHL (73 aa).

Belongs to the HscB family. Interacts with HscA and stimulates its ATPase activity.

Functionally, co-chaperone involved in the maturation of iron-sulfur cluster-containing proteins. Seems to help targeting proteins to be folded toward HscA. This Paraburkholderia xenovorans (strain LB400) protein is Co-chaperone protein HscB homolog.